Consider the following 111-residue polypeptide: Large ribosomal subunit protein uL22 (111 aa).

This sequence belongs to the universal ribosomal protein uL22 family. As to quaternary structure, part of the 50S ribosomal subunit.

Functionally, this protein binds specifically to 23S rRNA; its binding is stimulated by other ribosomal proteins, e.g. L4, L17, and L20. It is important during the early stages of 50S assembly. It makes multiple contacts with different domains of the 23S rRNA in the assembled 50S subunit and ribosome. In terms of biological role, the globular domain of the protein is located near the polypeptide exit tunnel on the outside of the subunit, while an extended beta-hairpin is found that lines the wall of the exit tunnel in the center of the 70S ribosome. This is Large ribosomal subunit protein uL22 from Clostridium novyi (strain NT).